A 344-amino-acid polypeptide reads, in one-letter code: Transcription factor JunB (344 aa).

Glycyl lysine isopeptide (Lys-Gly) (interchain with G-Cter in SUMO2) cross-links involve residues K4, K33, and K36. Over residues 51-65 (KGPGARGPGPEGSGA) the composition is skewed to gly residues. The tract at residues 51–75 (KGPGARGPGPEGSGAGSYFSGQGSD) is disordered. K81 is covalently cross-linked (Glycyl lysine isopeptide (Lys-Gly) (interchain with G-Cter in SUMO2)). Phosphothreonine occurs at positions 102 and 104. Residue S117 is modified to Phosphoserine. Residue K138 forms a Glycyl lysine isopeptide (Lys-Gly) (interchain with G-Cter in SUMO2) linkage. 2 disordered regions span residues 181–202 (NLSS…VGTG) and 237–257 (KEEP…PVSP). The span at 183–192 (SSYSPASAPS) shows a compositional bias: low complexity. The residue at position 237 (K237) is an N6-acetyllysine; alternate. A Glycyl lysine isopeptide (Lys-Gly) (interchain with G-Cter in SUMO1); alternate cross-link involves residue K237. K237 participates in a covalent cross-link: Glycyl lysine isopeptide (Lys-Gly) (interchain with G-Cter in SUMO2); alternate. Residues 237–250 (KEEPQTVPEARSRD) are compositionally biased toward basic and acidic residues. S248 bears the Phosphoserine mark. At T252 the chain carries Phosphothreonine. S256 carries the phosphoserine modification. Residues 265-292 (RIKVERKRLRNRLAATKCRKRKLERIAR) are basic motif. A bZIP domain is found at 265–328 (RIKVERKRLR…AQLKQKVMTH (64 aa)). Residues 293-321 (LEDKVKTLKAENAGLSSAAGLLREQVAQL) form a leucine-zipper region. K340 is covalently cross-linked (Glycyl lysine isopeptide (Lys-Gly) (interchain with G-Cter in SUMO2)).

Belongs to the bZIP family. Jun subfamily. In terms of assembly, binds DNA as a homodimer or as a heterodimer with another member of the Jun/Fos family. Component of an AP-1 transcription factor complex composed of JUN-FOS heterodimers. As part of the AP-1 transcription factor complex, forms heterodimers with FOSB, thereby binding to the AP-1 consensus sequence and stimulating transcription. Interacts with NFE2 (via its WW domains). Post-translationally, ubiquitinated by ITCH, leading to its degradation.

The protein resides in the nucleus. In terms of biological role, transcription factor involved in regulating gene activity following the primary growth factor response. Binds to the DNA sequence 5'-TGA[GC]TCA-3'. Heterodimerizes with proteins of the FOS family to form an AP-1 transcription complex, thereby enhancing its DNA binding activity to an AP-1 consensus sequence 5'-TGA[GC]TCA-3' and enhancing its transcriptional activity. The chain is Transcription factor JunB (Junb) from Mus musculus (Mouse).